The primary structure comprises 31 residues: Aspartate racemase (31 aa).

Residues 1–31 (PVAPEYLFKKEEDKGANKEEEEVAPELGIRA) form a disordered region. Over residues 7–18 (LFKKEEDKGANK) the composition is skewed to basic and acidic residues.

This sequence belongs to the aspartate/glutamate racemases family. Pyridoxal 5'-phosphate is required as a cofactor.

The catalysed reaction is L-aspartate = D-aspartate. Its activity is regulated as follows. Inhibited by hydroxylamine, aminooxyacetate, phenylhydrazine and sodium borohydride. In terms of biological role, highly specific toward aspartate and entirely inactive on glutamate, alanine and serine. This is Aspartate racemase from Anadara broughtonii (Blood clam).